A 132-amino-acid polypeptide reads, in one-letter code: ATP synthase epsilon chain, cyanelle (132 aa).

Belongs to the ATPase epsilon chain family. F-type ATPases have 2 components, CF(1) - the catalytic core - and CF(0) - the membrane proton channel. CF(1) has five subunits: alpha(3), beta(3), gamma(1), delta(1), epsilon(1). CF(0) has three main subunits: a, b and c.

The protein localises to the plastid. It localises to the cyanelle thylakoid membrane. Functionally, produces ATP from ADP in the presence of a proton gradient across the membrane. The chain is ATP synthase epsilon chain, cyanelle from Cyanophora paradoxa.